Reading from the N-terminus, the 553-residue chain is MNNVPWLSVLWLVPLAGAVLIILLPPGRRRLAKWAGMVVSVLTLAVSIVVAAEFKPSAEPYQFVEKHSWIPAFGAGYTLGVDGIAVVLVLLTTVLIPLLLVAGWNDATDADDLSPASGRYPQRPAPPRLRSSGGERTRGVHAYVALTLAIESMVLMSVIALDVLLFYVFFEAMLIPMYFLIGGFGQGAGRSRAAVKFLLYNLFGGLIMLAAVIGLYVVTAQYDSGTFDFREIVAGVAAGRYGADPAVFKALFLGFMFAFAIKAPLWPFHRWLPDAAVESTPATAVLMMAVMDKVGTFGMLRYCLQLFPDPSTYFRPLIVTLAIIGVIYGAIVAIGQTDMMRLIAYTSISHFGFIIAGIFVMTTQGQSGSTLYMLNHGLSTAAVFLIAGFLIARRGSRSIADYGGVQKVAPILAGTFMVSAMATVSLPGLAPFISEFLVLLGTFSRYWLAAAFGVTALVLSAVYMLWLYQRVMTGPVAEGNERIGDLVGREMIVVAPLIALLLVLGVYPKPVLDIINPAVENTMTTIGQHDPAPSVAHPVPAVGASRTAEGPHP.

3 helical membrane-spanning segments follow: residues 4–24 (VPWL…IILL), 34–54 (WAGM…AAEF), and 84–104 (IAVV…VAGW). Positions 113 to 135 (LSPASGRYPQRPAPPRLRSSGGE) are disordered. 10 helical membrane passes run 140–160 (VHAY…SVIA), 164–184 (LLFY…IGGF), 197–217 (FLLY…GLYV), 246–266 (AVFK…APLW), 316–336 (PLIV…AIGQ), 342–362 (LIAY…FVMT), 371–391 (LYML…GFLI), 420–440 (AMAT…LVLL), 447–467 (WLAA…MLWL), and 492–512 (IVVA…KPVL). The interval 527 to 553 (GQHDPAPSVAHPVPAVGASRTAEGPHP) is disordered. A compositionally biased stretch (low complexity) spans 531 to 544 (PAPSVAHPVPAVGA).

The protein belongs to the complex I subunit 4 family.

The protein resides in the cell membrane. It catalyses the reaction a quinone + NADH + 5 H(+)(in) = a quinol + NAD(+) + 4 H(+)(out). Functionally, NDH-1 shuttles electrons from NADH, via FMN and iron-sulfur (Fe-S) centers, to quinones in the respiratory chain. The immediate electron acceptor for the enzyme in this species is believed to be menaquinone. Couples the redox reaction to proton translocation (for every two electrons transferred, four hydrogen ions are translocated across the cytoplasmic membrane), and thus conserves the redox energy in a proton gradient. The polypeptide is NADH-quinone oxidoreductase subunit M (nuoM) (Mycobacterium tuberculosis (strain CDC 1551 / Oshkosh)).